The following is a 278-amino-acid chain: Shikimate dehydrogenase (NADP(+)) (278 aa).

Shikimate contacts are provided by residues 18 to 20 and Thr65; that span reads SRS. Lys69 acts as the Proton acceptor in catalysis. Position 80 (Glu80) interacts with NADP(+). The shikimate site is built by Asn89 and Asp104. NADP(+) is bound by residues 129 to 133 and Leu218; that span reads GAGGS. Tyr220 is a shikimate binding site. Residue Gly241 participates in NADP(+) binding.

The protein belongs to the shikimate dehydrogenase family. In terms of assembly, homodimer.

It carries out the reaction shikimate + NADP(+) = 3-dehydroshikimate + NADPH + H(+). It functions in the pathway metabolic intermediate biosynthesis; chorismate biosynthesis; chorismate from D-erythrose 4-phosphate and phosphoenolpyruvate: step 4/7. Involved in the biosynthesis of the chorismate, which leads to the biosynthesis of aromatic amino acids. Catalyzes the reversible NADPH linked reduction of 3-dehydroshikimate (DHSA) to yield shikimate (SA). This chain is Shikimate dehydrogenase (NADP(+)), found in Rhodopseudomonas palustris (strain ATCC BAA-98 / CGA009).